An 867-amino-acid chain; its full sequence is KH domain-containing protein akap-1 (867 aa).

A helical membrane pass occupies residues 108–128 (HALLIALGGFSIAALFVWYIN). Disordered regions lie at residues 145–458 (SNGL…QKRV) and 481–523 (HENA…GLTT). Residues 152 to 162 (ATASDVQTENG) show a composition bias toward polar residues. 4 stretches are compositionally biased toward basic and acidic residues: residues 186–211 (QQKDEDEKTQKKDAVQNEKPSIDKKQ), 218–239 (TEKKEEKTVEIHTETEETDHVA), 247–275 (SEHKEHDKKTKQKNDEPVSIDKKSEEIEV), and 298–307 (QFVKKEEPKL). Polar residues predominate over residues 336–345 (TKMNDATSPL). Over residues 363-383 (EMEKSFNEEEFRLNESSDIDR) the composition is skewed to basic and acidic residues. The span at 397–408 (NKNRSSQKRKGG) shows a compositional bias: basic residues. Basic and acidic residues-rich tracts occupy residues 441-458 (LTKEKSVEETPEKSQKRV) and 481-490 (HENASYEKSD). Residues 494–507 (LDSQNSEASSQDSG) show a composition bias toward polar residues. Positions 528–595 (LPMYEFEIPN…DEINHCLQML (68 aa)) constitute a KH domain. Residues 689 to 747 (PCQNGLLCAAPVGNAWFRAVTVQYFDETDEVFVKFVDYGGYSKMARQDLRQIRTDLMSL) enclose the Tudor domain.

The protein resides in the membrane. The sequence is that of KH domain-containing protein akap-1 from Caenorhabditis elegans.